The primary structure comprises 519 residues: Alkaline phosphatase, tissue-nonspecific isozyme (519 aa).

Residues Met1–Ser16 form the signal peptide. Asp59 is a binding site for Mg(2+). Zn(2+)-binding residues include Asp59 and Ser109. Ser109 serves as the catalytic Phosphoserine intermediate. An intrachain disulfide couples Cys138 to Cys200. An N-linked (GlcNAc...) asparagine glycan is attached at Asn139. Thr172 is a binding site for Mg(2+). Asn229 carries N-linked (GlcNAc...) asparagine glycosylation. Glu234 contacts Ca(2+). A glycan (N-linked (GlcNAc...) asparagine) is linked at Asn278. Residues Phe289 and Glu290 each coordinate Ca(2+). The N-linked (GlcNAc...) asparagine glycan is linked to Asn302. A Ca(2+)-binding site is contributed by Asp305. Glu331 contributes to the Mg(2+) binding site. 4 residues coordinate Zn(2+): Asp336, His340, Asp377, and His378. The N-linked (GlcNAc...) asparagine glycan is linked to Asn429. Position 453 (His453) interacts with Zn(2+). Residues Cys488 and Cys496 are joined by a disulfide bond. Ser498 is lipidated: GPI-anchor amidated serine. Positions Ala499–Cys519 are cleaved as a propeptide — removed in mature form.

The protein belongs to the alkaline phosphatase family. As to quaternary structure, homodimer. Mg(2+) is required as a cofactor. It depends on Zn(2+) as a cofactor. The cofactor is Ca(2+).

The protein resides in the cell membrane. Its subcellular location is the extracellular vesicle membrane. It carries out the reaction a phosphate monoester + H2O = an alcohol + phosphate. The enzyme catalyses diphosphate + H2O = 2 phosphate + H(+). The catalysed reaction is pyridoxal 5'-phosphate + H2O = pyridoxal + phosphate. It catalyses the reaction phosphoethanolamine + H2O = ethanolamine + phosphate. It carries out the reaction ATP + H2O = ADP + phosphate + H(+). The enzyme catalyses ADP + H2O = AMP + phosphate + H(+). The catalysed reaction is AMP + H2O = adenosine + phosphate. In terms of biological role, alkaline phosphatase that metabolizes various phosphate compounds and plays a key role in skeletal mineralization and adaptive thermogenesis. Has broad substrate specificity and can hydrolyze a considerable variety of compounds: however, only a few substrates, such as diphosphate (inorganic pyrophosphate; PPi) and pyridoxal 5'-phosphate (PLP) are natural substrates. Plays an essential role in skeletal and dental mineralization via its ability to hydrolyze extracellular diphosphate, a potent mineralization inhibitor, to phosphate: it thereby promotes hydroxyapatite crystal formation and increases inorganic phosphate concentration. Catalyzes dephosphorylation of PLP to pyridoxal (PL), the transportable form of vitamin B6, in order to provide a sufficient amount of PLP in the brain, an essential cofactor for enzymes catalyzing the synthesis of diverse neurotransmitters. Additionally, also able to mediate ATP degradation in a stepwise manner to adenosine, thereby regulating the availability of ligands for purinergic receptors. Involved in the establishment and growth of feather germs. The polypeptide is Alkaline phosphatase, tissue-nonspecific isozyme (ALPL) (Gallus gallus (Chicken)).